Here is a 1279-residue protein sequence, read N- to C-terminus: Cellulose synthase operon protein C (1279 aa).

Positions 1–21 (MRRHTLAIAILAALASTASVA) are cleaved as a signal peptide. 10 TPR repeats span residues 27–60 (QSLLIEQGYYWQSKKNPERALETWQKLLRLSPDQ), 62–94 (DALYGIGLIQVQQNHPAEAQKYLARLQALSPVP), 218–250 (ADETWRFALVWLGPPKPDQVSLFQQFLTVHPDD), 306–339 (VDALGGMGVLRQQQERYSEAENYLVQATRLPGGA), 384–417 (PGAAIALAGFQAQDNQFDDAEAGYRKVLARHPGD), 460–493 (ALRATQVGKLAEQRGDLKAAQAAYRQALDADPEN), 495–527 (WTRFALARMYLRDGQIRNARALIDGLLKSQPNQ), 606–639 (PERVAVLAAAYVEVGAAQYGLDMMQKVVENNPNP), 719–752 (ALGVGALARMYAASGNGKKAMELYAPLIQQNPNN), and 787–820 (PEILTSAARIYQGLGKNSEAAELLRKALAIENAM).

It participates in glycan metabolism; bacterial cellulose biosynthesis. In terms of biological role, required for maximal bacterial cellulose synthesis. The protein is Cellulose synthase operon protein C (bscS) of Pseudomonas fluorescens (strain SBW25).